A 406-amino-acid chain; its full sequence is Leucine aminopeptidase 1 (406 aa).

Positions 1 to 18 (MKVTNASLLALLLPAVSG) are cleaved as a signal peptide. The propeptide occupies 19-94 (RFVETGEPDR…LRAMTASRKK (76 aa)). The N-linked (GlcNAc...) asparagine glycan is linked to Asn186. The Zn(2+) site is built by His194, Asp213, Glu252, and Asp279. N-linked (GlcNAc...) asparagine glycosylation occurs at Asn306. A disulfide bridge links Cys328 with Cys332. His361 is a Zn(2+) binding site.

The protein belongs to the peptidase M28 family. M28E subfamily. As to quaternary structure, monomer. Zn(2+) is required as a cofactor.

The protein localises to the secreted. In terms of biological role, extracellular aminopeptidase that allows assimilation of proteinaceous substrates. This is Leucine aminopeptidase 1 (LAP1) from Chaetomium globosum (strain ATCC 6205 / CBS 148.51 / DSM 1962 / NBRC 6347 / NRRL 1970) (Soil fungus).